We begin with the raw amino-acid sequence, 1348 residues long: Kinesin-like protein KIF7 (1348 aa).

The 335-residue stretch at 15–349 (PVRVALRVRP…LNYASRAQNI (335 aa)) folds into the Kinesin motor domain. 94–101 (GQTGSGKT) is an ATP binding site. Residues 358-479 (HPEAERVPEE…EDQAAQGTSG (122 aa)) are interaction with DLG5. The interaction with SMO stretch occupies residues 358–1211 (HPEAERVPEE…LGRHMWINQE (854 aa)). Disordered stretches follow at residues 451-486 (RSTL…DEGT) and 607-674 (AQAD…VCPE). A coiled-coil region spans residues 480–542 (RKGDEGTQQL…ELRLRLELAQ (63 aa)). The span at 620–636 (SEEEGEEEEEEEEEEEE) shows a compositional bias: acidic residues. 2 coiled-coil regions span residues 698-1057 (APAA…IEAL) and 1109-1211 (FDKV…INQE). Position 903 is a phosphoserine (Ser903). Disordered regions lie at residues 1288-1314 (LCSE…VLPM) and 1328-1348 (KPRW…KNPL).

This sequence belongs to the TRAFAC class myosin-kinesin ATPase superfamily. Kinesin family. In terms of assembly, can form homodimers and interacts with microtubules. Interacts with GLI1 and SMO. Interacts with GLI2, GLI3 and SUFU. Interacts with NPHP1. Interacts with SMO and DLG5 (via PDZ4 or guanylate kinase-like domain). Post-translationally, polyubiquitinated by UBR3. As to expression, expressed in heart, lung, liver, kidney, testis, spleen and cerebellum.

The protein resides in the cell projection. It is found in the cilium. The protein localises to the cytoplasm. Its subcellular location is the cytoskeleton. It localises to the cilium basal body. Its function is as follows. Essential for hedgehog signaling regulation: acts both as a negative and a positive regulator of sonic hedgehog (Shh) and Indian hedgehog (Ihh) pathways, acting downstream of SMO, through both SUFU-dependent and -independent mechanisms. Involved in the regulation of microtubular dynamics. Required for proper organization of the ciliary tip and control of ciliary localization of SUFU-GLI2 complexes. Required for localization of GLI3 to cilia in response to Shh. Negatively regulates Shh signaling by preventing inappropriate activation of the transcriptional activator GLI2 in the absence of ligand. Positively regulates Shh signaling by preventing the processing of the transcription factor GLI3 into its repressor form. In keratinocytes, promotes the dissociation of SUFU-GLI2 complexes, GLI2 nuclear translocation and Shh signaling activation. Involved in the regulation of epidermal differentiation and chondrocyte development. In Mus musculus (Mouse), this protein is Kinesin-like protein KIF7 (Kif7).